A 175-amino-acid chain; its full sequence is Alkyl hydroperoxide reductase AhpD (175 aa).

The active-site Proton donor is the cysteine 131. Cysteine 131 and cysteine 134 are joined by a disulfide. Cysteine 134 (cysteine sulfenic acid (-SOH) intermediate) is an active-site residue.

This sequence belongs to the AhpD family.

The catalysed reaction is N(6)-[(R)-dihydrolipoyl]-L-lysyl-[lipoyl-carrier protein] + a hydroperoxide = N(6)-[(R)-lipoyl]-L-lysyl-[lipoyl-carrier protein] + an alcohol + H2O. Its function is as follows. Antioxidant protein with alkyl hydroperoxidase activity. Required for the reduction of the AhpC active site cysteine residues and for the regeneration of the AhpC enzyme activity. The chain is Alkyl hydroperoxide reductase AhpD from Brucella anthropi (strain ATCC 49188 / DSM 6882 / CCUG 24695 / JCM 21032 / LMG 3331 / NBRC 15819 / NCTC 12168 / Alc 37) (Ochrobactrum anthropi).